An 84-amino-acid chain; its full sequence is Extender of the chronological lifespan protein 2 (84 aa).

It belongs to the ecl1 family.

The protein localises to the nucleus. Functionally, involved in chronological cell aging. This is Extender of the chronological lifespan protein 2 (ecl2) from Schizosaccharomyces pombe (strain 972 / ATCC 24843) (Fission yeast).